Consider the following 601-residue polypeptide: MEVLCQAPAGNSNFACNPKFTAIRTRAISSNDTFKVISSTGNNKKMKGAIRTSIPKPSALPLKVSQLSPSADSMPVPASLQDVEAGKLIENNPSGGDTEELFQYLVEILASRVYDVAIDSPLQNAAKLSKKLGVNFWIKREDMQSVFSFKLRGAYNMMTKLSKEQLERGVITASAGNHAQGVALGAQRLKCTATIVMPVTTPEIKIEAVKNLDGKVVLHGDTFDKAQEHALKLAEDEGLTFIPPFDHPDVIIGQGTIGTEINRQLKDIHAVFVPVGGGGLIAGVAAYFKRVAPHTKIIGVEPFGASSMTQSLYHGERVKLEQVDNFADGVAVALVGEETFRLCKDLIDGMVLVSNDAISAAVKDVYDEGRNILETSGALAIAGAEAYCKYYNIKGENVVAIASGANMDFSKLKLVVDLADIGGQREALLATFMPEEPGSFKKFCELVGPMNITEFKYRYNSGRKQALVLYSVGVNTKSDLESMLERMKSSQLNTVNLTNNNLVKEHLRHLMGGRSEPSNEIFCQFIFPEKPGALRKFLDAFSPRWNISLFHYREQGELDASVLVGFQVPKGEIEEFRVQANNLGYSYEIESLNEASQLIME.

A chloroplast-targeting transit peptide spans 1–51; the sequence is MEVLCQAPAGNSNFACNPKFTAIRTRAISSNDTFKVISSTGNNKKMKGAIR. 2 consecutive ACT-like domains span residues 427–499 and 521–592; these read ALLA…NLTN and IFCQ…IESL.

It belongs to the serine/threonine dehydratase family. The cofactor is pyridoxal 5'-phosphate.

The protein resides in the plastid. The protein localises to the chloroplast. It catalyses the reaction L-threonine = 2-oxobutanoate + NH4(+). It functions in the pathway amino-acid biosynthesis; L-isoleucine biosynthesis; 2-oxobutanoate from L-threonine: step 1/1. In terms of biological role, catalyzes the conversion of threonine to alpha-keto butyrate in isoleucine (Ile) biosynthesis. Required for JA-Ile biosynthesis, a signaling molecule involved in defense and resistance to the herbivore Manduca sexta caterpillars. In Nicotiana attenuata (Coyote tobacco), this protein is Threonine dehydratase.